A 396-amino-acid polypeptide reads, in one-letter code: Phosphoglycerate kinase (396 aa).

Substrate is bound by residues 21–23 (DLN), R36, 59–62 (HLGR), R113, and R146. ATP contacts are provided by residues K197, E319, and 345 to 348 (GGDT).

It belongs to the phosphoglycerate kinase family. As to quaternary structure, monomer.

It is found in the cytoplasm. The catalysed reaction is (2R)-3-phosphoglycerate + ATP = (2R)-3-phospho-glyceroyl phosphate + ADP. It participates in carbohydrate degradation; glycolysis; pyruvate from D-glyceraldehyde 3-phosphate: step 2/5. The polypeptide is Phosphoglycerate kinase (Legionella pneumophila (strain Lens)).